The sequence spans 534 residues: Inosine-5'-monophosphate dehydrogenase (534 aa).

2 CBS domains span residues 117-181 (YVMQ…GTPI) and 190-255 (TTPI…PMAS). NAD(+) is bound by residues 292–294 (DSS) and 342–344 (GMG). The K(+) site is built by Gly-344 and Gly-346. Residue Ser-347 participates in IMP binding. Cys-349 contributes to the K(+) binding site. Cys-349 functions as the Thioimidate intermediate in the catalytic mechanism. IMP contacts are provided by residues 382–384 (DGG), 405–406 (GG), and 430–434 (YRGMG). The Proton acceptor role is filled by Arg-448. Position 461 (Gln-461) interacts with IMP. K(+)-binding residues include Glu-520, Gly-521, and Gly-522.

This sequence belongs to the IMPDH/GMPR family. As to quaternary structure, homotetramer. The cofactor is K(+).

It localises to the cytoplasm. The enzyme catalyses IMP + NAD(+) + H2O = XMP + NADH + H(+). It participates in purine metabolism; XMP biosynthesis via de novo pathway; XMP from IMP: step 1/1. Mycophenolic acid (MPA) is a non-competitive inhibitor that prevents formation of the closed enzyme conformation by binding to the same site as the amobile flap. In contrast, mizoribine monophosphate (MZP) is a competitive inhibitor that induces the closed conformation. MPA is a potent inhibitor of mammalian IMPDHs but a poor inhibitor of the bacterial enzymes. MZP is a more potent inhibitor of bacterial IMPDH. Functionally, catalyzes the conversion of inosine 5'-phosphate (IMP) to xanthosine 5'-phosphate (XMP), the first committed and rate-limiting step in the de novo synthesis of guanine nucleotides, and therefore plays an important role in the regulation of cell growth. The chain is Inosine-5'-monophosphate dehydrogenase from Caenorhabditis elegans.